Consider the following 329-residue polypeptide: Phosphoenolpyruvate transferase (329 aa).

Residue Asp61 coordinates 7,8-didemethyl-8-hydroxy-5-deazariboflavin.

Belongs to the CofD family. As to quaternary structure, homodimer. It depends on Mg(2+) as a cofactor.

The catalysed reaction is enolpyruvoyl-2-diphospho-5'-guanosine + 7,8-didemethyl-8-hydroxy-5-deazariboflavin = dehydro coenzyme F420-0 + GMP + H(+). The protein operates within cofactor biosynthesis; coenzyme F420 biosynthesis. In terms of biological role, catalyzes the transfer of the phosphoenolpyruvate moiety from enoylpyruvoyl-2-diphospho-5'-guanosine (EPPG) to 7,8-didemethyl-8-hydroxy-5-deazariboflavin (FO) with the formation of dehydro coenzyme F420-0 and GMP. This chain is Phosphoenolpyruvate transferase, found in Mycobacterium ulcerans (strain Agy99).